Here is a 466-residue protein sequence, read N- to C-terminus: Aladin (466 aa).

WD repeat units follow at residues 135-174, 179-218, 229-269, 271-310, and 378-418; these read WLNS…TTAT, PSQT…HLGR, PNNL…MQPL, RLGP…TTER, and LVGG…FDLQ.

It localises to the nucleus. It is found in the nuclear pore complex. The protein resides in the cytoplasm. The protein localises to the cytoskeleton. Its subcellular location is the spindle. Involved in mitotic spindle assembly. The sequence is that of Aladin from Drosophila melanogaster (Fruit fly).